Reading from the N-terminus, the 466-residue chain is Polycomb group protein FIE1 (466 aa).

Residues methionine 1 to serine 10 are compositionally biased toward basic residues. Residues methionine 1–leucine 71 form a disordered region. Positions serine 31 to serine 49 are enriched in low complexity. WD repeat units follow at residues aspartate 167–serine 209, glycine 212–valine 252, glycine 258–glutamate 298, isoleucine 324–glycine 361, proline 374–isoleucine 414, and glutamine 421–valine 460.

It belongs to the WD repeat ESC family. In terms of assembly, interacts with EZ1 and CLF. Component of the polycomb repressive complex 2 (PRC2), which methylates 'Lys-27' residues of histone H3 (H3K27me3), leading to transcriptional repression of the affected target gene. In terms of tissue distribution, expressed specifically in seed endosperm.

Its function is as follows. Polycomb group (PcG) protein. PcG proteins act by forming multiprotein complexes, which are required to maintain the transcriptionally repressive state of homeotic genes throughout development. PcG proteins are not required to initiate repression, but to maintain it during later stages of development. They act via the methylation of histones, rendering chromatin heritably changed in its expressibility. Together with EZ1 and CLF forms a complex that is involved in gene transcriptional repression by trimethylation on histone H3 'Lys-27' (H3K27me3) of target genes. Involved in the regulation of embryo and seed endosperm development. FIE1-containing PcG complex in seed endosperm regulates the expression of various transcription factors by trimethylation on histone H3 'Lys-27' (H3K27me3) of target genes. Involved in the overall expression regulation of nutrient metabolism genes, such as prolamin synthesis and seed storage protein synthesis genes. Can regulate valine, leucine and isoleucine metabolism-related genes. The protein is Polycomb group protein FIE1 of Oryza sativa subsp. japonica (Rice).